We begin with the raw amino-acid sequence, 37 residues long: Large ribosomal subunit protein bL36 (37 aa).

Belongs to the bacterial ribosomal protein bL36 family.

In Geobacter sp. (strain M21), this protein is Large ribosomal subunit protein bL36.